Consider the following 154-residue polypeptide: Deoxyuridine 5'-triphosphate nucleotidohydrolase (154 aa).

Residues 70 to 72 (RSG), asparagine 83, 87 to 89 (LID), and methionine 97 each bind substrate.

The protein belongs to the dUTPase family. It depends on Mg(2+) as a cofactor.

It carries out the reaction dUTP + H2O = dUMP + diphosphate + H(+). The protein operates within pyrimidine metabolism; dUMP biosynthesis; dUMP from dCTP (dUTP route): step 2/2. Its function is as follows. This enzyme is involved in nucleotide metabolism: it produces dUMP, the immediate precursor of thymidine nucleotides and it decreases the intracellular concentration of dUTP so that uracil cannot be incorporated into DNA. The chain is Deoxyuridine 5'-triphosphate nucleotidohydrolase from Buchnera aphidicola subsp. Acyrthosiphon pisum (strain 5A).